We begin with the raw amino-acid sequence, 359 residues long: Probable ribonucleotide transport ATP-binding protein mkl (359 aa).

In terms of domain architecture, ABC transporter spans 28–264 (IEVNGLTKSF…DEPVVRQFLN (237 aa)). Position 60–67 (60–67 (GPSGTGKS)) interacts with ATP.

Belongs to the ABC transporter superfamily.

In terms of biological role, not known, could be involved in the transport of ribonucleotides. This Mycobacterium bovis (strain ATCC BAA-935 / AF2122/97) protein is Probable ribonucleotide transport ATP-binding protein mkl (mkl).